A 255-amino-acid polypeptide reads, in one-letter code: Zinc import ATP-binding protein ZnuC (255 aa).

One can recognise an ABC transporter domain in the interval 4–219; sequence VDVDGLSLRY…PEYRALFGTG (216 aa). 36-43 serves as a coordination point for ATP; that stretch reads GPNGSGKT. Positions 234–255 are disordered; the sequence is EHDHHDGCAHGQATEDRTEAAE.

The protein belongs to the ABC transporter superfamily. Zinc importer (TC 3.A.1.15.5) family. As to quaternary structure, the complex is composed of two ATP-binding proteins (ZnuC), two transmembrane proteins (ZnuB) and a solute-binding protein (ZnuA).

Its subcellular location is the cell inner membrane. The catalysed reaction is Zn(2+)(out) + ATP(in) + H2O(in) = Zn(2+)(in) + ADP(in) + phosphate(in) + H(+)(in). In terms of biological role, part of the ABC transporter complex ZnuABC involved in zinc import. Responsible for energy coupling to the transport system. This is Zinc import ATP-binding protein ZnuC from Roseobacter denitrificans (strain ATCC 33942 / OCh 114) (Erythrobacter sp. (strain OCh 114)).